Here is a 229-residue protein sequence, read N- to C-terminus: Orotidine 5'-phosphate decarboxylase (229 aa).

Substrate is bound by residues Asp-12, Lys-34, 61–70 (DWKLHDIGAT), Thr-116, Arg-177, Gln-186, Gly-206, and Arg-207. Lys-63 serves as the catalytic Proton donor.

The protein belongs to the OMP decarboxylase family. Type 1 subfamily. Homodimer.

It catalyses the reaction orotidine 5'-phosphate + H(+) = UMP + CO2. It functions in the pathway pyrimidine metabolism; UMP biosynthesis via de novo pathway; UMP from orotate: step 2/2. Catalyzes the decarboxylation of orotidine 5'-monophosphate (OMP) to uridine 5'-monophosphate (UMP). The polypeptide is Orotidine 5'-phosphate decarboxylase (Caulobacter sp. (strain K31)).